The chain runs to 212 residues: Ribonuclease HII (212 aa).

Positions 1 to 206 (MICGVDEAGK…VKNLLHQKNQ (206 aa)) constitute an RNase H type-2 domain. Aspartate 6, glutamate 7, and aspartate 101 together coordinate a divalent metal cation.

This sequence belongs to the RNase HII family. It depends on Mn(2+) as a cofactor. Mg(2+) serves as cofactor.

The protein resides in the cytoplasm. The catalysed reaction is Endonucleolytic cleavage to 5'-phosphomonoester.. Functionally, endonuclease that specifically degrades the RNA of RNA-DNA hybrids. This is Ribonuclease HII from Methanospirillum hungatei JF-1 (strain ATCC 27890 / DSM 864 / NBRC 100397 / JF-1).